A 197-amino-acid chain; its full sequence is Casparian strip membrane protein 4 (197 aa).

The Cytoplasmic portion of the chain corresponds to 1–34 (MMSSTTIDVPAESSNVAKGKAVLVAAPRPGGWKK). A helical membrane pass occupies residues 35-55 (GIAIVDFVLRLGAVAAALGAA). Over 56-85 (TTMATADQTLPFFTQFFQFEASYDSFTTFQ) the chain is Extracellular. The chain crosses the membrane as a helical span at residues 86–106 (FFVITMALVGCYLVLSLPLSI). Over 107–118 (VSIIRPHALGPK) the chain is Cytoplasmic. Residues 119–139 (LFLIILDTVFLTLATASAASA) traverse the membrane as a helical segment. Topologically, residues 140–171 (AAVVYVAHNGNQDSNWLAICNQFGDFCAQTSG) are extracellular. The chain crosses the membrane as a helical span at residues 172–192 (AVVSSLVAVVVFVLLIVMSAL). The Cytoplasmic segment spans residues 193 to 197 (ALGKH).

The protein belongs to the Casparian strip membrane proteins (CASP) family. In terms of assembly, homodimer and heterodimers.

It localises to the cell membrane. In terms of biological role, regulates membrane-cell wall junctions and localized cell wall deposition. Required for establishment of the Casparian strip membrane domain (CSD) and the subsequent formation of Casparian strips, a cell wall modification of the root endodermis that determines an apoplastic barrier between the intraorganismal apoplasm and the extraorganismal apoplasm and prevents lateral diffusion. This chain is Casparian strip membrane protein 4, found in Lotus japonicus (Lotus corniculatus var. japonicus).